The primary structure comprises 225 residues: MAVRSLWAGRLRVQRLLAWSAAWESKGWPLPFSTATQRTAGEDCRSEDPPDELGPPLAERALRVKAVKLEKEVQDLTVRYQRAIADCENIRRRTQRCVEDAKIFGIQSFCKDLVEVADILEKTTECISEESEPEDQKLTLEKVFRGLLLLEAKLKSVFAKHGLEKLTPIGDKYDPHEHELICHVPAGVGVQPGTVALVRQDGYKLHGRTIRLARVEVAVESQRRL.

A mitochondrion-targeting transit peptide spans methionine 1–phenylalanine 32. Position 142 is an N6-acetyllysine (lysine 142).

It belongs to the GrpE family. As to quaternary structure, probable component of the PAM complex at least composed of a mitochondrial HSP70 protein, GRPEL1 or GRPEL2, TIMM44, TIMM16/PAM16 and TIMM14/DNAJC19.

It localises to the mitochondrion matrix. In terms of biological role, essential component of the PAM complex, a complex required for the translocation of transit peptide-containing proteins from the inner membrane into the mitochondrial matrix in an ATP-dependent manner. Seems to control the nucleotide-dependent binding of mitochondrial HSP70 to substrate proteins. Stimulates ATPase activity of mt-HSP70. May also serve to modulate the interconversion of oligomeric (inactive) and monomeric (active) forms of mt-HSP70. This Homo sapiens (Human) protein is GrpE protein homolog 2, mitochondrial (GRPEL2).